The chain runs to 387 residues: 3-ketoacyl-CoA thiolase (387 aa).

Cys-91 serves as the catalytic Acyl-thioester intermediate. Active-site proton acceptor residues include His-343 and Cys-373.

Belongs to the thiolase-like superfamily. Thiolase family. In terms of assembly, heterotetramer of two alpha chains (FadB) and two beta chains (FadA).

It localises to the cytoplasm. The enzyme catalyses an acyl-CoA + acetyl-CoA = a 3-oxoacyl-CoA + CoA. Its pathway is lipid metabolism; fatty acid beta-oxidation. Its function is as follows. Catalyzes the final step of fatty acid oxidation in which acetyl-CoA is released and the CoA ester of a fatty acid two carbons shorter is formed. The chain is 3-ketoacyl-CoA thiolase from Shigella flexneri serotype 5b (strain 8401).